The sequence spans 572 residues: Putative two-component response regulator ARR13 (572 aa).

One can recognise a Response regulatory domain in the interval 17-134; it reads NVMVVDDNRV…DLPKIYQFAL (118 aa). Position 71 is a 4-aspartylphosphate (Asp71). Positions 175–225 are disordered; the sequence is KKNCSSKSDTRTVNSTNVSHVSTNGSRKNRKRKPKGGPSDDGESLSQPPKK. Over residues 179–197 the composition is skewed to polar residues; the sequence is SSKSDTRTVNSTNVSHVST. Residues 224–227 carry the Nuclear localization signal motif; sequence KKKK. Positions 227 to 277 form a DNA-binding region, myb-like GARP; that stretch reads KIWWTNPLQDLFLQAIQHIGYDKVVPKKILAIMNVPYLTRENVASHLQKYR. The segment covering 509 to 522 has biased composition (polar residues); that stretch reads NQDQSNGESSNTIA. Residues 509-531 form a disordered region; that stretch reads NQDQSNGESSNTIATPETNTPNF.

The protein belongs to the ARR family. Type-B subfamily. In terms of assembly, binds the target DNA as a monomer. Post-translationally, two-component system major event consists of a His-to-Asp phosphorelay between a sensor histidine kinase (HK) and a response regulator (RR). In plants, the His-to-Asp phosphorelay involves an additional intermediate named Histidine-containing phosphotransfer protein (HPt). This multistep phosphorelay consists of a His-Asp-His-Asp sequential transfer of a phosphate group between first a His and an Asp of the HK protein, followed by the transfer to a conserved His of the HPt protein and finally the transfer to an Asp in the receiver domain of the RR protein.

It is found in the nucleus. Putative transcriptional activator that binds specifically to the DNA sequence 5'-[AG]GATT-3'. Functions as a response regulator involved in His-to-Asp phosphorelay signal transduction system. Phosphorylation of the Asp residue in the receiver domain activates the ability of the protein to promote the transcription of target genes. Could directly activate some type-A response regulators in response to cytokinins. This chain is Putative two-component response regulator ARR13 (ARR13), found in Arabidopsis thaliana (Mouse-ear cress).